The sequence spans 396 residues: Probable sugar efflux transporter (396 aa).

The next 12 membrane-spanning stretches (helical) occupy residues 15–35 (VLIM…PVAM), 51–71 (GLMM…AMLA), 84–104 (LFII…FWIL), 109–129 (MCIA…VMRI), 137–157 (QALG…LPIG), 168–188 (VTFG…IRLL), 209–229 (PLLL…FTAY), 245–265 (NFAT…SLLF), 273–293 (PTKF…LLLF), 297–317 (TIIA…CIGL), 333–353 (VATA…ALFG), and 365–385 (IGYT…TTHL).

The protein belongs to the major facilitator superfamily. SotB (TC 2.A.1.2) family.

The protein resides in the cell inner membrane. Functionally, involved in the efflux of sugars. The physiological role may be the reduction of the intracellular concentration of toxic sugars or sugar metabolites. This chain is Probable sugar efflux transporter, found in Haemophilus influenzae (strain ATCC 51907 / DSM 11121 / KW20 / Rd).